The chain runs to 109 residues: Thioredoxin (109 aa).

Positions 2–109 (TNCIVELTDG…LKDFLNLYLK (108 aa)) constitute a Thioredoxin domain. Cys33 and Cys36 form a disulfide bridge.

It belongs to the thioredoxin family.

Participates in various redox reactions through the reversible oxidation of its active center dithiol to a disulfide and catalyzes dithiol-disulfide exchange reactions. The chain is Thioredoxin (trxA) from Buchnera aphidicola subsp. Baizongia pistaciae (strain Bp).